The primary structure comprises 334 residues: MTKPIVFSGAQPSGELTIGNYMGALRQWVNMQDDYHCIYCIVDQHAITVRQDAQKLRKATLDTLALYLACGIDPEKSTIFVQSHVPEHAQLGWALNCYTYFGELSRMTQFKDKSARYAENINAGLFDYPVLMAADILLYQTNLVPVGEDQKQHLELSRDIAQRFNALYGDIFKVPEPFIPKSGARVMSLLEPTKKMSKSDDNRNNVIGLLEDPKSVVKKIKRAVTDSDEPPVVRYDVQNKAGVSNLLDILSAVTGQSIPELEKQFEGKMYGHLKGEVADAVSGMLTELQERYHRFRNDEAFLQQVMKDGAEKASAHASRTLKAVYEAIGFVAKP.

Residues 11-13 (QPS) and 19-20 (GN) each bind ATP. Residues 12–20 (PSGELTIGN) carry the 'HIGH' region motif. Asp-135 contributes to the L-tryptophan binding site. Residues 147–149 (GED), Val-186, and 195–199 (KMSKS) each bind ATP. The 'KMSKS' region motif lies at 195–199 (KMSKS).

Belongs to the class-I aminoacyl-tRNA synthetase family. Homodimer.

It is found in the cytoplasm. It carries out the reaction tRNA(Trp) + L-tryptophan + ATP = L-tryptophyl-tRNA(Trp) + AMP + diphosphate + H(+). In terms of biological role, catalyzes the attachment of tryptophan to tRNA(Trp). This Escherichia coli O157:H7 protein is Tryptophan--tRNA ligase.